The sequence spans 86 residues: Ferredoxin-like protein YgcO (86 aa).

In terms of domain architecture, 4Fe-4S ferredoxin-type spans 45 to 74; it reads GNLRIDYRSCLECGTCRLLCDESTLQQWRY.

The protein belongs to the bacterial-type ferredoxin family. FixX subfamily.

In terms of biological role, could be a 3Fe-4S cluster-containing protein. Probably participates in a redox process with YgcN, YgcQ and YgcR. The chain is Ferredoxin-like protein YgcO (ygcO) from Escherichia coli (strain K12).